The primary structure comprises 432 residues: Polypyrimidine tract-binding protein homolog 3 (432 aa).

RRM domains lie at 6-80 (KVVH…FSSH), 98-187 (NRIL…YNND), 245-319 (CTVL…FSKH), and 355-429 (KMIH…FSQL).

The protein resides in the nucleus. In terms of biological role, plays a role in pre-mRNA splicing. Binds to the polypyrimidine tract of introns. May promote the binding of U2 snRNP to pre-mRNA. The polypeptide is Polypyrimidine tract-binding protein homolog 3 (Arabidopsis thaliana (Mouse-ear cress)).